A 121-amino-acid chain; its full sequence is Centrocin 2 (121 aa).

The N-terminal stretch at 1 to 20 (MMIKIAVVLCAVMATSMVFA) is a signal peptide. Residues 21 to 50 (NDVKEQELADLLDLLISEEVSSPDDAVAES) constitute a propeptide that is removed on maturation. 2 positions are modified to 6'-bromotryptophan: Trp-51 and Trp-59. A disulfide bridge links Cys-77 with Cys-112. Residues 83–106 (SPQEARAKVLEAFPEMKESDLDEE) constitute a propeptide that is removed on maturation. At Gln-107 the chain carries Pyrrolidone carboxylic acid. At His-119 the chain carries Histidine amide.

Heterodimer of a light and a heavy chain, probably disulfide-linked.

Functionally, has antimicrobial activity against Gram-negative bacteria, Gram-positive bacteria and against fungi with minimum inhibitory concentration (MIC) between 0.78 uM and 50 uM. Shows little hemolytic activity at concentrations up to 12.5 uM but &gt;50% lysis at 100 uM. This chain is Centrocin 2, found in Echinus esculentus (Sea urchin).